The primary structure comprises 393 residues: Acetylornithine aminotransferase (393 aa).

Residues 96-97 (GT) and Phe129 each bind pyridoxal 5'-phosphate. Residue Arg132 coordinates N(2)-acetyl-L-ornithine. 214 to 217 (DEVQ) serves as a coordination point for pyridoxal 5'-phosphate. Lys243 is modified (N6-(pyridoxal phosphate)lysine). Ser271 contacts N(2)-acetyl-L-ornithine. Position 272 (Thr272) interacts with pyridoxal 5'-phosphate.

This sequence belongs to the class-III pyridoxal-phosphate-dependent aminotransferase family. ArgD subfamily. In terms of assembly, homodimer. The cofactor is pyridoxal 5'-phosphate.

It localises to the cytoplasm. The enzyme catalyses N(2)-acetyl-L-ornithine + 2-oxoglutarate = N-acetyl-L-glutamate 5-semialdehyde + L-glutamate. Its pathway is amino-acid biosynthesis; L-arginine biosynthesis; N(2)-acetyl-L-ornithine from L-glutamate: step 4/4. This Rhodobacter capsulatus (strain ATCC BAA-309 / NBRC 16581 / SB1003) protein is Acetylornithine aminotransferase.